The following is a 324-amino-acid chain: tRNA dimethylallyltransferase (324 aa).

An ATP-binding site is contributed by 17–24; the sequence is GPTASGKT. Residue 19–24 coordinates substrate; the sequence is TASGKT. Interaction with substrate tRNA regions lie at residues 42-45, 166-170, 251-256, and 284-291; these read DSAL, QRIQR, RCVGYR, and KRQITWLR.

This sequence belongs to the IPP transferase family. In terms of assembly, monomer. Mg(2+) is required as a cofactor.

The enzyme catalyses adenosine(37) in tRNA + dimethylallyl diphosphate = N(6)-dimethylallyladenosine(37) in tRNA + diphosphate. In terms of biological role, catalyzes the transfer of a dimethylallyl group onto the adenine at position 37 in tRNAs that read codons beginning with uridine, leading to the formation of N6-(dimethylallyl)adenosine (i(6)A). This is tRNA dimethylallyltransferase from Burkholderia lata (strain ATCC 17760 / DSM 23089 / LMG 22485 / NCIMB 9086 / R18194 / 383).